Reading from the N-terminus, the 236-residue chain is Ribonuclease 3 (236 aa).

Residues 13 to 138 (TEKVFKISGY…LIGAIYVDGG (126 aa)) enclose the RNase III domain. Residue E51 participates in Mg(2+) binding. D55 is a catalytic residue. Positions 124 and 127 each coordinate Mg(2+). The active site involves E127. Residues 164–232 (DAKTALQEWA…AKLMLEKVTK (69 aa)) enclose the DRBM domain.

Belongs to the ribonuclease III family. In terms of assembly, homodimer. Mg(2+) serves as cofactor.

It is found in the cytoplasm. The enzyme catalyses Endonucleolytic cleavage to 5'-phosphomonoester.. Digests double-stranded RNA. Involved in the processing of primary rRNA transcript to yield the immediate precursors to the large and small rRNAs (23S and 16S). Processes some mRNAs, and tRNAs when they are encoded in the rRNA operon. Processes pre-crRNA and tracrRNA of type II CRISPR loci if present in the organism. This is Ribonuclease 3 from Anaplasma phagocytophilum (strain HZ).